Here is a 425-residue protein sequence, read N- to C-terminus: UDP-N-acetyl-D-glucosamine 6-dehydrogenase (425 aa).

Positions 17, 35, 40, 86, and 121 each coordinate NAD(+). Cys261 (nucleophile) is an active-site residue. Arg332 is a binding site for NAD(+).

It belongs to the UDP-glucose/GDP-mannose dehydrogenase family. Homotrimer.

The catalysed reaction is UDP-N-acetyl-alpha-D-glucosamine + 2 NAD(+) + H2O = UDP-2-acetamido-2-deoxy-alpha-D-glucuronate + 2 NADH + 3 H(+). It participates in capsule biogenesis; capsule polysaccharide biosynthesis. The protein operates within glycan metabolism; Vi-antigen biosynthesis. Functionally, dehydrogenase required for the biosynthesis of the capsular polysaccharide, commonly referred as the Vi antigen, an important virulence factor. Catalyzes the conversion of UDP-N-acetylglucosamine (UDP-GlcNAc) to UDP-N-acetylglucosaminuronic acid (UDP-GlcNAcA). Cannot use UDP-GalNAc, UDP-Glc and UDP-Gal as substrates. The protein is UDP-N-acetyl-D-glucosamine 6-dehydrogenase of Salmonella typhi.